Reading from the N-terminus, the 554-residue chain is DDB1- and CUL4-associated factor 11 homolog (554 aa).

The segment at 24 to 52 (QRMKNRNDSDTDFSDDDEETSGGCPKMTP) is disordered. Positions 33–43 (DTDFSDDDEET) are enriched in acidic residues. WD repeat units lie at residues 245 to 284 (QNQC…RIRT), 288 to 328 (AHED…DGDV), 336 to 375 (GHRD…CQGG), 414 to 458 (GHSV…VSRR), and 461 to 500 (GHQA…EGVI). Residues 527 to 554 (PQRKLRKPISARNAKCPTTSSEPDDFQI) form a disordered region.

It belongs to the WD repeat LEC14B family.

Involved in regulation of lifespan. Required for dopaminergic CEP neuron degeneration in response to Mn(2+). This is DDB1- and CUL4-associated factor 11 homolog (wdr-23) from Caenorhabditis briggsae.